We begin with the raw amino-acid sequence, 417 residues long: UDP-N-acetylglucosamine 1-carboxyvinyltransferase (417 aa).

Position 22–23 (22–23 (KN)) interacts with phosphoenolpyruvate. Residue arginine 93 coordinates UDP-N-acetyl-alpha-D-glucosamine. The active-site Proton donor is cysteine 117. 2-(S-cysteinyl)pyruvic acid O-phosphothioketal is present on cysteine 117. UDP-N-acetyl-alpha-D-glucosamine contacts are provided by residues 122–126 (RPVDQ), aspartate 305, and isoleucine 327.

It belongs to the EPSP synthase family. MurA subfamily.

Its subcellular location is the cytoplasm. The catalysed reaction is phosphoenolpyruvate + UDP-N-acetyl-alpha-D-glucosamine = UDP-N-acetyl-3-O-(1-carboxyvinyl)-alpha-D-glucosamine + phosphate. It participates in cell wall biogenesis; peptidoglycan biosynthesis. Its function is as follows. Cell wall formation. Adds enolpyruvyl to UDP-N-acetylglucosamine. The polypeptide is UDP-N-acetylglucosamine 1-carboxyvinyltransferase (Nitrosomonas europaea (strain ATCC 19718 / CIP 103999 / KCTC 2705 / NBRC 14298)).